The sequence spans 500 residues: Replication factor C large subunit (500 aa).

44-51 (GSPGVGKT) is an ATP binding site. The disordered stretch occupies residues 443–500 (HAADDLGASDGETTNASGTASSSGDDGDADGTTDGDGSDANDGNDDDDDGQAGLSDFV). Low complexity predominate over residues 455-466 (TTNASGTASSSG). Positions 467-492 (DDGDADGTTDGDGSDANDGNDDDDDG) are enriched in acidic residues.

The protein belongs to the activator 1 small subunits family. RfcL subfamily. In terms of assembly, heteromultimer composed of small subunits (RfcS) and large subunits (RfcL).

Functionally, part of the RFC clamp loader complex which loads the PCNA sliding clamp onto DNA. This Halorubrum lacusprofundi (strain ATCC 49239 / DSM 5036 / JCM 8891 / ACAM 34) protein is Replication factor C large subunit.